Reading from the N-terminus, the 1262-residue chain is DNA-directed RNA polymerase subunit beta' (1262 aa).

Residues cysteine 220, cysteine 294, cysteine 301, and cysteine 304 each contribute to the Zn(2+) site.

The protein belongs to the RNA polymerase beta' chain family. RpoC2 subfamily. As to quaternary structure, in cyanobacteria the RNAP catalytic core is composed of 2 alpha, 1 beta, 1 beta', 1 gamma and 1 omega subunit. When a sigma factor is associated with the core the holoenzyme is formed, which can initiate transcription. The cofactor is Zn(2+).

The catalysed reaction is RNA(n) + a ribonucleoside 5'-triphosphate = RNA(n+1) + diphosphate. In terms of biological role, DNA-dependent RNA polymerase catalyzes the transcription of DNA into RNA using the four ribonucleoside triphosphates as substrates. This is DNA-directed RNA polymerase subunit beta' from Gloeobacter violaceus (strain ATCC 29082 / PCC 7421).